Consider the following 102-residue polypeptide: NADH-quinone oxidoreductase subunit K (102 aa).

Helical transmembrane passes span 5-25 (LAHY…GIFL), 31-51 (IILL…FVAF), and 62-82 (VFVF…LAIL).

This sequence belongs to the complex I subunit 4L family. In terms of assembly, NDH-1 is composed of 14 different subunits. Subunits NuoA, H, J, K, L, M, N constitute the membrane sector of the complex.

The protein localises to the cell inner membrane. The catalysed reaction is a quinone + NADH + 5 H(+)(in) = a quinol + NAD(+) + 4 H(+)(out). In terms of biological role, NDH-1 shuttles electrons from NADH, via FMN and iron-sulfur (Fe-S) centers, to quinones in the respiratory chain. The immediate electron acceptor for the enzyme in this species is believed to be ubiquinone. Couples the redox reaction to proton translocation (for every two electrons transferred, four hydrogen ions are translocated across the cytoplasmic membrane), and thus conserves the redox energy in a proton gradient. The sequence is that of NADH-quinone oxidoreductase subunit K from Bordetella parapertussis (strain 12822 / ATCC BAA-587 / NCTC 13253).